The sequence spans 901 residues: Pyruvate, phosphate dikinase (901 aa).

The tract at residues 1–321 is N-terminal; it reads MNIAKSIHFL…WLIEQKPVEA (321 aa). The tract at residues 322–380 is linker 1; sequence KSTISLVRLLLDLYEREVVDAEYVVKSVKPGQLNEILHPVIDMTSVTGLKSSQGGIIGV. The central stretch occupies residues 381-482; sequence PGAAVGRVYF…TINEGDFVTL (102 aa). Phosphoserine; by PDRP1 is present on S440. H442 acts as the Tele-phosphohistidine intermediate in catalysis. Residues 483–522 form a linker 2 region; that stretch reads NVPYYGESTLYMGAAQLIEPDPETSGLVSFIELAKGFVRS. Residues 523–901 are C-terminal; the sequence is FHVRANADSP…SAKSGGRRAR (379 aa). R550, R606, E750, G771, T772, N773, and D774 together coordinate substrate. Mg(2+) is bound at residue E750. Residue D774 participates in Mg(2+) binding. The Proton donor role is filled by C835. Positions 879 to 901 are disordered; it reads EKEGRKPAWRGRSSAKSGGRRAR.

Belongs to the PEP-utilizing enzyme family. In terms of assembly, homodimer. The cofactor is Mg(2+). In terms of processing, phosphorylation of Ser-440 in the dark inactivates the enzyme. Dephosphorylation upon light stimulation reactivates the enzyme.

It catalyses the reaction pyruvate + phosphate + ATP = phosphoenolpyruvate + AMP + diphosphate + H(+). Its activity is regulated as follows. Activated by light-induced dephosphorylation. Inhibited by dark-induced phosphorylation. Both reactions are catalyzed by PDRP1. Functionally, catalyzes the reversible phosphorylation of pyruvate and phosphate. This is Pyruvate, phosphate dikinase (ppdK) from Treponema pallidum (strain Nichols).